Reading from the N-terminus, the 367-residue chain is Probable butyrate kinase (367 aa).

It belongs to the acetokinase family.

It is found in the cytoplasm. It carries out the reaction butanoate + ATP = butanoyl phosphate + ADP. The sequence is that of Probable butyrate kinase from Exiguobacterium sibiricum (strain DSM 17290 / CCUG 55495 / CIP 109462 / JCM 13490 / 255-15).